We begin with the raw amino-acid sequence, 218 residues long: Hypoxanthine-guanine phosphoribosyltransferase (218 aa).

Position 2 is an N-acetylalanine (A2). K69 lines the GMP pocket. K103 is modified (N6-acetyllysine). K115 participates in a covalent cross-link: Glycyl lysine isopeptide (Lys-Gly) (interchain with G-Cter in SUMO1); alternate. A Glycyl lysine isopeptide (Lys-Gly) (interchain with G-Cter in SUMO2); alternate cross-link involves residue K115. GMP is bound by residues 134-142, K166, 186-188, and D194; these read EDIIDTGKT and KFV. Residue D138 is the Proton acceptor of the active site. Residue T142 is modified to Phosphothreonine. Mg(2+) is bound at residue D194.

This sequence belongs to the purine/pyrimidine phosphoribosyltransferase family. In terms of assembly, homotetramer. Requires Mg(2+) as cofactor.

Its subcellular location is the cytoplasm. It catalyses the reaction IMP + diphosphate = hypoxanthine + 5-phospho-alpha-D-ribose 1-diphosphate. It carries out the reaction GMP + diphosphate = guanine + 5-phospho-alpha-D-ribose 1-diphosphate. The protein operates within purine metabolism; IMP biosynthesis via salvage pathway; IMP from hypoxanthine: step 1/1. Converts guanine to guanosine monophosphate, and hypoxanthine to inosine monophosphate. Transfers the 5-phosphoribosyl group from 5-phosphoribosylpyrophosphate onto the purine. Plays a central role in the generation of purine nucleotides through the purine salvage pathway. This Homo sapiens (Human) protein is Hypoxanthine-guanine phosphoribosyltransferase (HPRT1).